A 67-amino-acid chain; its full sequence is Beta-defensin 110 (67 aa).

A signal peptide spans Met1–Ala19. Disulfide bonds link Cys35–Cys63, Cys42–Cys56, and Cys46–Cys64.

It belongs to the beta-defensin family.

It is found in the secreted. Functionally, has antibacterial activity. The chain is Beta-defensin 110 (DEFB110) from Pan troglodytes (Chimpanzee).